We begin with the raw amino-acid sequence, 125 residues long: Small ribosomal subunit protein bS6 (125 aa).

The segment at 96-125 (ETGASSMMKTVEREEARKASQAEFAAANER) is disordered. Over residues 105 to 115 (TVEREEARKAS) the composition is skewed to basic and acidic residues.

Belongs to the bacterial ribosomal protein bS6 family.

Its function is as follows. Binds together with bS18 to 16S ribosomal RNA. The chain is Small ribosomal subunit protein bS6 from Paracidovorax citrulli (strain AAC00-1) (Acidovorax citrulli).